The primary structure comprises 173 residues: Pathogenesis-related protein 1A/1B (173 aa).

The N-terminal stretch at 1-20 (MSTSAVLFLLLAVFAAGASA) is a signal peptide.

This sequence belongs to the thaumatin family.

The protein is Pathogenesis-related protein 1A/1B of Hordeum vulgare (Barley).